Here is a 299-residue protein sequence, read N- to C-terminus: Probable lipid kinase YegS (299 aa).

In terms of domain architecture, DAGKc spans 2 to 133 (AEFPASLLIL…IDMAQVNKQT (132 aa)). Residues T40, 66–72 (GDGTINE), and T95 each bind ATP. Mg(2+) is bound by residues L215, D218, and L220. The active-site Proton acceptor is the E271.

Belongs to the diacylglycerol/lipid kinase family. YegS lipid kinase subfamily. The cofactor is Mg(2+). Requires Ca(2+) as cofactor.

The protein resides in the cytoplasm. In terms of biological role, probably phosphorylates lipids; the in vivo substrate is unknown. The protein is Probable lipid kinase YegS of Escherichia coli O17:K52:H18 (strain UMN026 / ExPEC).